A 510-amino-acid polypeptide reads, in one-letter code: Putative cytochrome P450 cyp-13B1 (510 aa).

Residue Cys456 participates in heme binding.

It belongs to the cytochrome P450 family. It depends on heme as a cofactor.

Its function is as follows. Cytochromes P450 are a group of heme-thiolate monooxygenases. They oxidize a variety of structurally unrelated compounds, including steroids, fatty acids, and xenobiotics. May play a role in the regulation of lifespan. The chain is Putative cytochrome P450 cyp-13B1 from Caenorhabditis elegans.